The sequence spans 527 residues: Probable protein kinase UbiB (527 aa).

The Protein kinase domain occupies 118-501 (DFERVPVASA…QKRTNRLLQG (384 aa)). Residues 124-132 (VASASIAQV) and Lys150 contribute to the ATP site. Asp285 (proton acceptor) is an active-site residue. A helical transmembrane segment spans residues 502–522 (LLMFGVAVGVGAVLARAWLAI).

The protein belongs to the ABC1 family. UbiB subfamily.

It is found in the cell inner membrane. Its pathway is cofactor biosynthesis; ubiquinone biosynthesis [regulation]. Its function is as follows. Is probably a protein kinase regulator of UbiI activity which is involved in aerobic coenzyme Q (ubiquinone) biosynthesis. This chain is Probable protein kinase UbiB, found in Paraburkholderia phymatum (strain DSM 17167 / CIP 108236 / LMG 21445 / STM815) (Burkholderia phymatum).